Consider the following 79-residue polypeptide: Small ribosomal subunit protein bS16 (79 aa).

This sequence belongs to the bacterial ribosomal protein bS16 family.

This chain is Small ribosomal subunit protein bS16, found in Nitratidesulfovibrio vulgaris (strain ATCC 29579 / DSM 644 / CCUG 34227 / NCIMB 8303 / VKM B-1760 / Hildenborough) (Desulfovibrio vulgaris).